Reading from the N-terminus, the 485-residue chain is Glutamate--tRNA ligase (485 aa).

A 'HIGH' region motif is present at residues 11–21; the sequence is PSPTGHLHIGN. The 'KMSKS' region motif lies at 252-256; the sequence is KLSKR. K255 lines the ATP pocket.

The protein belongs to the class-I aminoacyl-tRNA synthetase family. Glutamate--tRNA ligase type 1 subfamily. As to quaternary structure, monomer.

Its subcellular location is the cytoplasm. The catalysed reaction is tRNA(Glu) + L-glutamate + ATP = L-glutamyl-tRNA(Glu) + AMP + diphosphate. Catalyzes the attachment of glutamate to tRNA(Glu) in a two-step reaction: glutamate is first activated by ATP to form Glu-AMP and then transferred to the acceptor end of tRNA(Glu). The sequence is that of Glutamate--tRNA ligase from Bacillus licheniformis (strain ATCC 14580 / DSM 13 / JCM 2505 / CCUG 7422 / NBRC 12200 / NCIMB 9375 / NCTC 10341 / NRRL NRS-1264 / Gibson 46).